A 230-amino-acid polypeptide reads, in one-letter code: Large ribosomal subunit protein uL1 (230 aa).

The protein belongs to the universal ribosomal protein uL1 family. As to quaternary structure, part of the 50S ribosomal subunit.

Its function is as follows. Binds directly to 23S rRNA. The L1 stalk is quite mobile in the ribosome, and is involved in E site tRNA release. Functionally, protein L1 is also a translational repressor protein, it controls the translation of the L11 operon by binding to its mRNA. The protein is Large ribosomal subunit protein uL1 of Nitrosomonas europaea (strain ATCC 19718 / CIP 103999 / KCTC 2705 / NBRC 14298).